Here is a 317-residue protein sequence, read N- to C-terminus: Putative HTH-type transcriptional regulatory protein Mlab_0160 (317 aa).

Residues 132–189 form the HTH cro/C1-type domain; that stretch reads LRTLREEQAMSLGDLAHALGVSRRTISKYEGGMGTTLEMAMRLEEFFNDDIVMPIDLL. The H-T-H motif DNA-binding region spans 143 to 162; sequence LGDLAHALGVSRRTISKYEG. The disordered stretch occupies residues 199–219; sequence VPASLASGHNPESDAQPKRPE. A compositionally biased stretch (basic and acidic residues) spans 209–219; the sequence is PESDAQPKRPE.

This is Putative HTH-type transcriptional regulatory protein Mlab_0160 from Methanocorpusculum labreanum (strain ATCC 43576 / DSM 4855 / Z).